A 515-amino-acid polypeptide reads, in one-letter code: Leucine-rich repeat transmembrane neuronal protein 2 (515 aa).

The N-terminal stretch at 1 to 33 (MGLHFKWPLGAPMLAAIYAMSVVLKMLPALGMA) is a signal peptide. The region spanning 34-61 (CPPKCRCEKLLFYCDSQGFHSVPNATDK) is the LRRNT domain. Residues 34–421 (CPPKCRCEKL…EPDNAIFTQR (388 aa)) lie on the Extracellular side of the membrane. An N-linked (GlcNAc...) asparagine glycan is attached at Asn57. LRR repeat units lie at residues 63–83 (SLGL…QFAS), 86–107 (QLTW…AFQG), 110–131 (KLKE…TFTQ), 134–155 (NLQN…LFYG), 158–179 (KLQT…LFWD), 182–203 (SLEF…GFAG), 206–227 (KLRE…HFLR), 230–251 (SLHT…MDWT), 254–275 (TLEK…VFET), and 278–299 (NLKI…ILNS). N-linked (GlcNAc...) asparagine glycosylation is present at Asn126. The N-linked (GlcNAc...) asparagine glycan is linked to Asn243. Residues 311–362 (NLWECSPRVCALASWLGSFQGRWEHSILCHSPDHTQGEDILDAVHGFQLCWN) form the LRRCT domain. N-linked (GlcNAc...) asparagine glycosylation occurs at Asn362. A helical membrane pass occupies residues 422-442 (VITGTMALLFSFFFIIFIVFI). The Cytoplasmic portion of the chain corresponds to 443–515 (SRKCCPPTLR…QQLPYKECEV (73 aa)). Residues 512-515 (ECEV) carry the Involved in DLG4-binding motif.

This sequence belongs to the LRRTM family. Interacts with DLG4. Interacts with neurexin NRXN1; interaction is mediated by heparan sulfate glycan modification on neurexin. In terms of tissue distribution, expressed in neuronal tissues.

It localises to the cell membrane. The protein resides in the postsynaptic cell membrane. Its function is as follows. Involved in the development and maintenance of excitatory synapses in the vertebrate nervous system. Regulates surface expression of AMPA receptors and instructs the development of functional glutamate release sites. Acts as a ligand for the presynaptic receptors NRXN1-A and NRXN1-B. In Mus musculus (Mouse), this protein is Leucine-rich repeat transmembrane neuronal protein 2 (Lrrtm2).